We begin with the raw amino-acid sequence, 223 residues long: Ribonuclease 3 (223 aa).

The 124-residue stretch at 4 to 127 (LEEFERNLGY…VMGAIYLEAG (124 aa)) folds into the RNase III domain. Position 40 (Glu40) interacts with Mg(2+). Asp44 is a catalytic residue. The Mg(2+) site is built by Asp113 and Glu116. Glu116 is an active-site residue. The DRBM domain occupies 154–223 (DYKTALQEVT…AKIALEKIKK (70 aa)).

It belongs to the ribonuclease III family. In terms of assembly, homodimer. Mg(2+) is required as a cofactor.

It localises to the cytoplasm. It carries out the reaction Endonucleolytic cleavage to 5'-phosphomonoester.. Functionally, digests double-stranded RNA. Involved in the processing of primary rRNA transcript to yield the immediate precursors to the large and small rRNAs (23S and 16S). Processes some mRNAs, and tRNAs when they are encoded in the rRNA operon. Processes pre-crRNA and tracrRNA of type II CRISPR loci if present in the organism. The sequence is that of Ribonuclease 3 from Campylobacter concisus (strain 13826).